Here is an 87-residue protein sequence, read N- to C-terminus: Probable Fe(2+)-trafficking protein (87 aa).

The protein belongs to the Fe(2+)-trafficking protein family.

Its function is as follows. Could be a mediator in iron transactions between iron acquisition and iron-requiring processes, such as synthesis and/or repair of Fe-S clusters in biosynthetic enzymes. This Francisella tularensis subsp. mediasiatica (strain FSC147) protein is Probable Fe(2+)-trafficking protein.